Consider the following 368-residue polypeptide: MEIDIEKLPIIDISSFQNNENDKNQVAKEINKACKEYGFFYIKNHGVDQELIENLQNVIKKFFSLPLEIKMKWKMGLTNREWLGFFKVGQEITYGQVDWKEGCYYSSEMDGDINTIHNVPLYPTAEQEEQYEIQGFKSTIHTYIEKLTHLSQQIIEAISLSLNLPQDYFFKNYTYDPFILMGLLHYPSFHHQEQEEEQEDDESNNGGKKSPNPDESKKPEVEKFGTGQHTDWGLLTVLYQDDVGGLQVKSKNSEEYIDAPPIPGTFICNIGDMLDKMTGGYYLSNLHRVKYNKSGRDRFSIPFFLDPSLNSIPKLIPNYDQLSQFADKPERWDKQNIHEFDGTYGQYFIKKIGRVFPDYVYKKSGELV.

The 131-residue stretch at proline 177–proline 307 folds into the Fe2OG dioxygenase domain. The tract at residues histidine 191 to threonine 226 is disordered. Positions glutamine 194 to serine 203 are enriched in acidic residues. The span at proline 211 to lysine 223 shows a compositional bias: basic and acidic residues. Fe cation contacts are provided by histidine 229, aspartate 231, and histidine 287. Residue arginine 298 participates in 2-oxoglutarate binding.

Belongs to the iron/ascorbate-dependent oxidoreductase family. Fe(2+) serves as cofactor.

The catalysed reaction is 1-aminocyclopropane-1-carboxylate + L-ascorbate + O2 = ethene + L-dehydroascorbate + hydrogen cyanide + CO2 + 2 H2O. It functions in the pathway alkene biosynthesis; ethylene biosynthesis via S-adenosyl-L-methionine; ethylene from S-adenosyl-L-methionine: step 2/2. Its function is as follows. Involved in ethylene biosynthesis. Overexpression induces overproduction of ethylene. The protein is 1-aminocyclopropane-1-carboxylate oxidase (aco) of Dictyostelium discoideum (Social amoeba).